Reading from the N-terminus, the 93-residue chain is DNA-binding protein HB1 (93 aa).

This sequence belongs to the bacterial histone-like protein family. In terms of assembly, homodimer.

Histone-like DNA-binding protein which is capable of wrapping DNA to stabilize it, and thus to prevent its denaturation under extreme environmental conditions. The protein is DNA-binding protein HB1 (hup) of Bifidobacterium longum (strain NCC 2705).